The following is a 554-amino-acid chain: CTP synthase (554 aa).

The segment at 1–265 (MTPLIFVTGG…DELVIDQFKL (265 aa)) is amidoligase domain. Residue Ser-13 participates in CTP binding. Ser-13 contributes to the UTP binding site. ATP is bound by residues 14–19 (SLGKGI) and Asp-71. Mg(2+)-binding residues include Asp-71 and Glu-139. CTP is bound by residues 146 to 148 (DIE), 186 to 191 (KTKPTQ), and Lys-222. UTP-binding positions include 186-191 (KTKPTQ) and Lys-222. In terms of domain architecture, Glutamine amidotransferase type-1 spans 292–545 (NIAVVGKYVD…VRAAREKKAG (254 aa)). Gly-353 provides a ligand contact to L-glutamine. The active-site Nucleophile; for glutamine hydrolysis is the Cys-380. L-glutamine contacts are provided by residues 381–384 (YGMQ), Glu-404, and Arg-471. Catalysis depends on residues His-518 and Glu-520.

It belongs to the CTP synthase family. Homotetramer.

The enzyme catalyses UTP + L-glutamine + ATP + H2O = CTP + L-glutamate + ADP + phosphate + 2 H(+). The catalysed reaction is L-glutamine + H2O = L-glutamate + NH4(+). It catalyses the reaction UTP + NH4(+) + ATP = CTP + ADP + phosphate + 2 H(+). Its pathway is pyrimidine metabolism; CTP biosynthesis via de novo pathway; CTP from UDP: step 2/2. Allosterically activated by GTP, when glutamine is the substrate; GTP has no effect on the reaction when ammonia is the substrate. The allosteric effector GTP functions by stabilizing the protein conformation that binds the tetrahedral intermediate(s) formed during glutamine hydrolysis. Inhibited by the product CTP, via allosteric rather than competitive inhibition. Functionally, catalyzes the ATP-dependent amination of UTP to CTP with either L-glutamine or ammonia as the source of nitrogen. Regulates intracellular CTP levels through interactions with the four ribonucleotide triphosphates. This Xanthomonas axonopodis pv. citri (strain 306) protein is CTP synthase.